A 504-amino-acid chain; its full sequence is Maturase K (504 aa).

It belongs to the intron maturase 2 family. MatK subfamily.

The protein localises to the plastid. It localises to the chloroplast. Its function is as follows. Usually encoded in the trnK tRNA gene intron. Probably assists in splicing its own and other chloroplast group II introns. This chain is Maturase K, found in Erythrina crista-galli (Cockspur coral tree).